A 279-amino-acid polypeptide reads, in one-letter code: Acetyl-coenzyme A carboxylase carboxyl transferase subunit beta (279 aa).

The region spanning 23 to 279 (LWWKCEECGA…LVTLFSMLKV (257 aa)) is the CoA carboxyltransferase N-terminal domain. The Zn(2+) site is built by Cys-27, Cys-30, Cys-46, and Cys-49. Residues 27–49 (CEECGAMLHKKQFEDHFFTCAEC) form a C4-type zinc finger.

Belongs to the AccD/PCCB family. Acetyl-CoA carboxylase is a heterohexamer composed of biotin carboxyl carrier protein (AccB), biotin carboxylase (AccC) and two subunits each of ACCase subunit alpha (AccA) and ACCase subunit beta (AccD). The cofactor is Zn(2+).

Its subcellular location is the cytoplasm. It carries out the reaction N(6)-carboxybiotinyl-L-lysyl-[protein] + acetyl-CoA = N(6)-biotinyl-L-lysyl-[protein] + malonyl-CoA. The protein operates within lipid metabolism; malonyl-CoA biosynthesis; malonyl-CoA from acetyl-CoA: step 1/1. Component of the acetyl coenzyme A carboxylase (ACC) complex. Biotin carboxylase (BC) catalyzes the carboxylation of biotin on its carrier protein (BCCP) and then the CO(2) group is transferred by the transcarboxylase to acetyl-CoA to form malonyl-CoA. The chain is Acetyl-coenzyme A carboxylase carboxyl transferase subunit beta from Pelodictyon phaeoclathratiforme (strain DSM 5477 / BU-1).